The chain runs to 292 residues: Putative phosphatase MPN_381 (292 aa).

The Nucleophile role is filled by Asp-11. Residue Asp-11 coordinates Mg(2+). Leu-12 is a phosphate binding site. Position 13 (Asp-13) interacts with Mg(2+). Phosphate is bound by residues 60–61 and Lys-217; that span reads TG. A Mg(2+)-binding site is contributed by Asp-242. A phosphate-binding site is contributed by Asn-245.

Belongs to the HAD-like hydrolase superfamily. Cof family. It depends on Mg(2+) as a cofactor.

This Mycoplasma pneumoniae (strain ATCC 29342 / M129 / Subtype 1) (Mycoplasmoides pneumoniae) protein is Putative phosphatase MPN_381.